Reading from the N-terminus, the 186-residue chain is GMP synthase [glutamine-hydrolyzing] subunit A (186 aa).

The Glutamine amidotransferase type-1 domain occupies 3–186 (MILIINNHGQ…FENFYDVCRS (184 aa)). The active-site Nucleophile is Cys77. Active-site residues include His164 and Glu166.

As to quaternary structure, heterodimer composed of a glutamine amidotransferase subunit (A) and a GMP-binding subunit (B).

It carries out the reaction XMP + L-glutamine + ATP + H2O = GMP + L-glutamate + AMP + diphosphate + 2 H(+). Its pathway is purine metabolism; GMP biosynthesis; GMP from XMP (L-Gln route): step 1/1. Functionally, catalyzes the synthesis of GMP from XMP. The sequence is that of GMP synthase [glutamine-hydrolyzing] subunit A from Methanothermobacter thermautotrophicus (strain ATCC 29096 / DSM 1053 / JCM 10044 / NBRC 100330 / Delta H) (Methanobacterium thermoautotrophicum).